The following is a 308-amino-acid chain: Acetylglutamate kinase (308 aa).

Substrate-binding positions include 86-87 (GG), Arg108, and Asn201.

It belongs to the acetylglutamate kinase family. ArgB subfamily.

Its subcellular location is the cytoplasm. It carries out the reaction N-acetyl-L-glutamate + ATP = N-acetyl-L-glutamyl 5-phosphate + ADP. It functions in the pathway amino-acid biosynthesis; L-arginine biosynthesis; N(2)-acetyl-L-ornithine from L-glutamate: step 2/4. Functionally, catalyzes the ATP-dependent phosphorylation of N-acetyl-L-glutamate. The polypeptide is Acetylglutamate kinase (Prochlorococcus marinus (strain MIT 9313)).